Consider the following 162-residue polypeptide: Corticoliberin (162 aa).

The first 24 residues, 1–24, serve as a signal peptide directing secretion; it reads MKFQLWVSTGILLVSLLPCHECRA. Residues 25-119 constitute a propeptide that is removed on maturation; that stretch reads FIKSPASSPG…QEDPTEKAKR (95 aa). Residues 91–122 form a disordered region; that stretch reads SQPGMRAASLDGADSPYSAQEDPTEKAKRAEE. Positions 113 to 122 are enriched in basic and acidic residues; sequence PTEKAKRAEE. Ile160 is subject to Isoleucine amide.

The protein belongs to the sauvagine/corticotropin-releasing factor/urotensin I family.

It localises to the secreted. Functionally, this hormone from hypothalamus regulates the release of corticotropin from pituitary gland. This Xenopus laevis (African clawed frog) protein is Corticoliberin (crh).